Here is a 486-residue protein sequence, read N- to C-terminus: Glycogen synthase (486 aa).

ADP-alpha-D-glucose is bound at residue Lys-15.

Belongs to the glycosyltransferase 1 family. Bacterial/plant glycogen synthase subfamily.

The catalysed reaction is [(1-&gt;4)-alpha-D-glucosyl](n) + ADP-alpha-D-glucose = [(1-&gt;4)-alpha-D-glucosyl](n+1) + ADP + H(+). Its pathway is glycan biosynthesis; glycogen biosynthesis. In terms of biological role, synthesizes alpha-1,4-glucan chains using ADP-glucose. The chain is Glycogen synthase from Pseudothermotoga lettingae (strain ATCC BAA-301 / DSM 14385 / NBRC 107922 / TMO) (Thermotoga lettingae).